A 20-amino-acid polypeptide reads, in one-letter code: Alanine aminotransferase 1 (20 aa).

At Lys-11 the chain carries N6-(pyridoxal phosphate)lysine. Residue Lys-11 is glycosylated (N-linked (Glc) (glycation) lysine; in vitro).

It belongs to the class-I pyridoxal-phosphate-dependent aminotransferase family. Alanine aminotransferase subfamily. Homodimer. Pyridoxal 5'-phosphate serves as cofactor. Glycation of Lys-11 inactivates the enzyme.

It localises to the cytoplasm. The catalysed reaction is L-alanine + 2-oxoglutarate = pyruvate + L-glutamate. The protein operates within amino-acid degradation; L-alanine degradation via transaminase pathway; pyruvate from L-alanine: step 1/1. Catalyzes the reversible transamination between alanine and 2-oxoglutarate to form pyruvate and glutamate. Participates in cellular nitrogen metabolism and also in liver gluconeogenesis starting with precursors transported from skeletal muscles. The chain is Alanine aminotransferase 1 (GPT) from Sus scrofa (Pig).